Reading from the N-terminus, the 293-residue chain is C-type lectin domain family 4 member G (293 aa).

Over 1 to 31 (MDTTRYSKWGGSSEEVPGGPWGRWVHWSRRP) the chain is Cytoplasmic. Position 12 is a phosphoserine (serine 12). A helical; Signal-anchor for type II membrane protein transmembrane segment spans residues 32 to 52 (LFLALAVLVTTVLWAVILSIL). The Extracellular segment spans residues 53–293 (LSKASTERAA…GWICEKRHNC (241 aa)). The N-linked (GlcNAc...) asparagine glycan is linked to asparagine 73. Positions 96-136 (SGTQAQLQTTRAELGEAQAKLMEQESALRELRERVTQGLAE) form a coiled coil. N-linked (GlcNAc...) asparagine glycosylation occurs at asparagine 159. One can recognise a C-type lectin domain in the interval 172–287 (FEGSCYFFSV…CDSEKDGWIC (116 aa)). Cysteine 264 and cysteine 278 are oxidised to a cystine.

(Microbial infection) Interacts with Japanese encephalitis virus envelope protein E. In terms of assembly, (Microbial infection) Interacts with ebolavirus glycoprotein. As to quaternary structure, (Microbial infection) Interacts with SARS-CoV spike glycoprotein. (Microbial infection) Interacts with lassa virus and Lymphocytic choriomeningitis virus glycoprotein. Expressed exclusively in fetal and adult liver and in lymph nodes. Specifically expressed by endothelial cells lining lymph node and liver sinuses (at protein level).

It localises to the cell membrane. Its function is as follows. Binds mannose, N-acetylglucosamine (GlcNAc) and fucose, but not galactose, in a Ca(2+)-dependent manner, in vitro. In terms of biological role, (Microbial infection) Acts as a receptor for Japanese encephalitis virus. (Microbial infection) Acts as a receptor for Ebolavirus. Functionally, (Microbial infection) Acts as a receptor for SARS-CoV. Its function is as follows. (Microbial infection) Acts as a receptor for Lassa virus and Lymphocytic choriomeningitis virus glycoprotein. This chain is C-type lectin domain family 4 member G (CLEC4G), found in Homo sapiens (Human).